The primary structure comprises 154 residues: Insulin-like growth factor 1 (154 aa).

The tract at residues 50-78 (GPETLCGAELVDALQFVCGDRGFYFNKPT) is b. Cystine bridges form between cysteine 55–cysteine 97, cysteine 67–cysteine 110, and cysteine 96–cysteine 101. Residues 79-90 (GYGSSSRRAPQT) are c. Residues 91 to 111 (GIVDECCFRSCDLRRLEMYCA) are a. The interval 112–119 (PLKAAKSA) is d. Residues 120-154 (RSVRAQRHTDMPKAQKEVHLKNTSRGSAGNKNYRM) constitute a propeptide, e peptide. The disordered stretch occupies residues 121–154 (SVRAQRHTDMPKAQKEVHLKNTSRGSAGNKNYRM). Positions 126–139 (RHTDMPKAQKEVHL) are enriched in basic and acidic residues. Residues 140 to 154 (KNTSRGSAGNKNYRM) are compositionally biased toward polar residues.

The protein belongs to the insulin family. As to quaternary structure, forms a ternary complex with IGFR1 and ITGAV:ITGB3. Forms a ternary complex with IGFR1 and ITGA6:ITGB4. Forms a ternary complex with IGFBP3 and ALS.

It is found in the secreted. Functionally, the insulin-like growth factors, isolated from plasma, are structurally and functionally related to insulin but have a much higher growth-promoting activity. May be a physiological regulator of [1-14C]-2-deoxy-D-glucose (2DG) transport and glycogen synthesis in osteoblasts. Stimulates glucose transport in bone-derived osteoblastic (PyMS) cells and is effective at much lower concentrations than insulin, not only regarding glycogen and DNA synthesis but also with regard to enhancing glucose uptake. May play a role in synapse maturation. Ca(2+)-dependent exocytosis of IGF1 is required for sensory perception of smell in the olfactory bulb. Acts as a ligand for IGF1R. Binds to the alpha subunit of IGF1R, leading to the activation of the intrinsic tyrosine kinase activity which autophosphorylates tyrosine residues in the beta subunit thus initiating a cascade of down-stream signaling events leading to activation of the PI3K-AKT/PKB and the Ras-MAPK pathways. Binds to integrins ITGAV:ITGB3 and ITGA6:ITGB4. Its binding to integrins and subsequent ternary complex formation with integrins and IGFR1 are essential for IGF1 signaling. Induces the phosphorylation and activation of IGFR1, MAPK3/ERK1, MAPK1/ERK2 and AKT1. As part of the MAPK/ERK signaling pathway, acts as a negative regulator of apoptosis in cardiomyocytes via promotion of STUB1/CHIP-mediated ubiquitination and degradation of ICER-type isoforms of CREM. This is Insulin-like growth factor 1 from Ovis aries (Sheep).